The chain runs to 529 residues: Bifunctional purine biosynthesis protein PurH (529 aa).

The MGS-like domain maps to 1 to 148; sequence MQQRRPVRRA…KNHKDVAIVV (148 aa).

This sequence belongs to the PurH family.

It catalyses the reaction (6R)-10-formyltetrahydrofolate + 5-amino-1-(5-phospho-beta-D-ribosyl)imidazole-4-carboxamide = 5-formamido-1-(5-phospho-D-ribosyl)imidazole-4-carboxamide + (6S)-5,6,7,8-tetrahydrofolate. The catalysed reaction is IMP + H2O = 5-formamido-1-(5-phospho-D-ribosyl)imidazole-4-carboxamide. Its pathway is purine metabolism; IMP biosynthesis via de novo pathway; 5-formamido-1-(5-phospho-D-ribosyl)imidazole-4-carboxamide from 5-amino-1-(5-phospho-D-ribosyl)imidazole-4-carboxamide (10-formyl THF route): step 1/1. It participates in purine metabolism; IMP biosynthesis via de novo pathway; IMP from 5-formamido-1-(5-phospho-D-ribosyl)imidazole-4-carboxamide: step 1/1. This is Bifunctional purine biosynthesis protein PurH from Salmonella dublin (strain CT_02021853).